The chain runs to 146 residues: Snaclec coagulation factor IX/factor X-binding protein subunit B (146 aa).

An N-terminal signal peptide occupies residues 1-23 (MGRFIFMSFGFLVVFLSLSGTAA). The 123-residue stretch at 24-146 (DCPSDWSSYE…MAQFVCEFQA (123 aa)) folds into the C-type lectin domain. Intrachain disulfides connect C25–C36, C53–C142, and C119–C134. The Ca(2+) site is built by S64, Q66, and E70. E143 is a binding site for Ca(2+).

This sequence belongs to the snaclec family. As to quaternary structure, heterodimer with subunit A of IX/X-bp or IX-bp; disulfide-linked. In terms of tissue distribution, expressed by the venom gland.

Its subcellular location is the secreted. Its function is as follows. When linked to subunit A of IX/X-bp, anticoagulant protein which binds to the gamma-carboxyglutamic acid-domain regions of factors IX (F9) and factor X (10) in the presence of calcium with a 1 to 1 stoichiometry. Functionally, when linked to subunit A of IX-bp, anticoagulant protein which binds to the gamma-carboxyglutamic acid-domain regions of factor IX (but not to factor X) in the presence of calcium with a 1 to 1 stoichiometry. In Protobothrops flavoviridis (Habu), this protein is Snaclec coagulation factor IX/factor X-binding protein subunit B.